The following is a 1151-amino-acid chain: Semaphorin-5B (1151 aa).

Residues 1–1036 are Extracellular-facing; that stretch reads MPCGFSPSPV…TDCAGFNLIH (1036 aa). A Sema domain is found at 103-553; sequence HPTVAFEDLQ…LRDGVLRVPL (451 aa). An N-linked (GlcNAc...) asparagine glycan is attached at N153. Cystine bridges form between C172/C182 and C199/C208. N-linked (GlcNAc...) asparagine glycans are attached at residues N236 and N345. Cystine bridges form between C322-C425 and C346-C388. N436 is a glycosylation site (N-linked (GlcNAc...) asparagine). One can recognise a PSI domain in the interval 555–602; the sequence is RCAAYRSQGACLGARDPYCGWDGKQQRCSTLEDSSNMSLWTQNITACP. 2 consecutive TSP type-1 domains span residues 664 to 720 and 722 to 771; these read NGAW…TPCP and PIFW…EGCP. 6 disulfide bridges follow: C676-C713, C680-C719, C691-C703, C734-C765, C738-C770, and C749-C755. O-linked (GalNAc...) threonine glycosylation is present at T788. TSP type-1 domains follow at residues 853 to 908, 910 to 965, and 966 to 1010; these read SGGW…QACP, RGAW…QACP, and EGWS…RPCP. 6 disulfide bridges follow: C865/C902, C869/C907, C880/C892, C922/C959, C926/C964, and C937/C949. The chain crosses the membrane as a helical; Signal-anchor for type III membrane protein span at residues 1037–1057; that stretch reads LVATGISCFLGSGLLTLAVYL. Over 1058 to 1151 the chain is Cytoplasmic; it reads SCQHCQRQSQ…SPGQRCFPNS (94 aa).

This sequence belongs to the semaphorin family.

It localises to the membrane. Functionally, may act as a positive axonal guidance cue. In Homo sapiens (Human), this protein is Semaphorin-5B (SEMA5B).